We begin with the raw amino-acid sequence, 308 residues long: Elongation factor Ts (308 aa).

The interval 80 to 83 (TDFV) is involved in Mg(2+) ion dislocation from EF-Tu.

This sequence belongs to the EF-Ts family.

Its subcellular location is the cytoplasm. Functionally, associates with the EF-Tu.GDP complex and induces the exchange of GDP to GTP. It remains bound to the aminoacyl-tRNA.EF-Tu.GTP complex up to the GTP hydrolysis stage on the ribosome. The sequence is that of Elongation factor Ts from Agrobacterium fabrum (strain C58 / ATCC 33970) (Agrobacterium tumefaciens (strain C58)).